Consider the following 686-residue polypeptide: ATP-dependent zinc metalloprotease FtsH 2 (686 aa).

Over Met-1–Asn-11 the chain is Cytoplasmic. The chain crosses the membrane as a helical span at residues Phe-12–Met-32. Residues Met-33–Phe-178 are Extracellular-facing. Residues Gly-179 to Ile-199 form a helical membrane-spanning segment. At Tyr-200–Lys-686 the chain is on the cytoplasmic side. ATP is bound at residue Gly-272–Thr-279. His-493 is a binding site for Zn(2+). Glu-494 is a catalytic residue. Positions 497 and 569 each coordinate Zn(2+).

It in the central section; belongs to the AAA ATPase family. This sequence in the C-terminal section; belongs to the peptidase M41 family. Homohexamer. It depends on Zn(2+) as a cofactor.

The protein resides in the cell membrane. In terms of biological role, acts as a processive, ATP-dependent zinc metallopeptidase for both cytoplasmic and membrane proteins. Plays a role in the quality control of integral membrane proteins. In Phytoplasma mali (strain AT), this protein is ATP-dependent zinc metalloprotease FtsH 2.